A 424-amino-acid chain; its full sequence is GTPase Obg (424 aa).

The region spanning 1 to 158 (MFIDTAKIFV…RWIKLELKLL (158 aa)) is the Obg domain. One can recognise an OBG-type G domain in the interval 159–331 (ADVGLIGFPN…LMKEAARLLS (173 aa)). GTP is bound by residues 165-172 (GFPNVGKS), 190-194 (FTTLK), 212-215 (DIPG), 282-285 (NKSD), and 312-314 (SAA). Residues S172 and T192 each coordinate Mg(2+). Residues 345–424 (RFIEEEKRFT…LNDFEFDFLL (80 aa)) form the OCT domain.

Belongs to the TRAFAC class OBG-HflX-like GTPase superfamily. OBG GTPase family. As to quaternary structure, monomer. The cofactor is Mg(2+).

The protein localises to the cytoplasm. In terms of biological role, an essential GTPase which binds GTP, GDP and possibly (p)ppGpp with moderate affinity, with high nucleotide exchange rates and a fairly low GTP hydrolysis rate. Plays a role in control of the cell cycle, stress response, ribosome biogenesis and in those bacteria that undergo differentiation, in morphogenesis control. In Clostridium botulinum (strain Okra / Type B1), this protein is GTPase Obg.